Consider the following 213-residue polypeptide: Ras-related protein Rab-19 (213 aa).

Residues S24, V26, G27, K28, T29, C30, D42, and T47 each coordinate GTP. T29 lines the Mg(2+) pocket. Residues 37-52 carry the Switch 1 motif; the sequence is SGIFMDNQQNTIGVDF. Mg(2+)-binding residues include T47 and D70. Positions 72–87 match the Switch 2 motif; it reads AGQERFRTITQSYYRS. Residues G73, N128, K129, D131, S159, A160, and K161 each coordinate GTP. S-geranylgeranyl cysteine attachment occurs at residues C211 and C213. The residue at position 213 (C213) is a Cysteine methyl ester.

It belongs to the small GTPase superfamily. Rab family. The cofactor is Mg(2+).

It is found in the cell membrane. It carries out the reaction GTP + H2O = GDP + phosphate + H(+). Regulated by guanine nucleotide exchange factors (GEFs) which promote the exchange of bound GDP for free GTP. Regulated by GTPase activating proteins (GAPs) which increase the GTP hydrolysis activity. Inhibited by GDP dissociation inhibitors (GDIs). The small GTPases Rab are key regulators of intracellular membrane trafficking, from the formation of transport vesicles to their fusion with membranes. Rabs cycle between an inactive GDP-bound form and an active GTP-bound form that is able to recruit to membranes different set of downstream effectors directly responsible for vesicle formation, movement, tethering and fusion. This chain is Ras-related protein Rab-19 (rab19), found in Xenopus laevis (African clawed frog).